The primary structure comprises 738 residues: Transcription activator of gluconeogenesis SMAC_06113 (738 aa).

The interval 1–65 (MPDDVGPAEA…KYDPKDPLRP (65 aa)) is disordered. Composition is skewed to basic and acidic residues over residues 28–39 (ATTKDDDEKMAE) and 51–64 (GDQKKKYDPKDPLR). A DNA-binding region (zn(2)-C6 fungal-type) is located at residues 74–102 (CYACQRAHLTCGDERPCQRCIKRGLAEAC). Disordered stretches follow at residues 255 to 278 (SSGAAETPPRDPSISQQGTAGDVG), 328 to 404 (HAYA…KRQR), 530 to 579 (GTNS…KEQP), and 636 to 673 (SVPTTAGGSGSSNGTVVNGGPDSSPAGKTERERSTGAN). Polar residues-rich tracts occupy residues 337–351 (TSLQSPSTENNSPQP) and 530–540 (GTNSDTLSVSS). The PAS domain maps to 475–546 (ALFEHEEFMH…SVSSKGGRGG (72 aa)). 2 stretches are compositionally biased toward low complexity: residues 568–579 (QQQQSQQQKEQP) and 636–655 (SVPTTAGGSGSSNGTVVNGG).

This sequence belongs to the ERT1/acuK family.

The protein resides in the nucleus. Its function is as follows. Transcription factor which regulates nonfermentable carbon utilization. Activator of gluconeogenetic genes. This is Transcription activator of gluconeogenesis SMAC_06113 from Sordaria macrospora (strain ATCC MYA-333 / DSM 997 / K(L3346) / K-hell).